The chain runs to 167 residues: uncharacterized protein (167 aa).

2 helical membrane passes run 96–115 (YVPAFIPLFAAYLTMFFNFY) and 119–138 (WGALSFAAGTIAAIVWIIAV).

It localises to the cell membrane. This is an uncharacterized protein from Bacillus subtilis (strain 168).